The primary structure comprises 192 residues: Genome polyprotein (192 aa).

Residues 1–52 (RNLGKVIDTLTCGFADLMGYIPLVGAPLGGAARALAHGVRVLEDGVNYATGN) lie on the Cytoplasmic side of the membrane. Positions 6–57 (VIDTLTCGFADLMGYIPLVGAPLGGAARALAHGVRVLEDGVNYATGNLPGCS) are interaction with APOA2. The interval 48-51 (YATG) is important for lipid droplets localization. Residues 53–73 (LPGCSFSIFLLALLSCLTVPA) form a helical membrane-spanning segment. Positions 62–75 (LLALLSCLTVPASA) are cleaved as a propeptide — ER anchor for the core protein, removed in mature form by host signal peptidase. The Lumenal portion of the chain corresponds to 74-192 (SAYQVRNSSG…WTTQGCNCSI (119 aa)). N-linked (GlcNAc...) asparagine; by host glycosylation is found at Asn-80, Asn-93, and Asn-118. Residues 149 to 180 (LVGSATLCSALYVGDLCGSVFLVGQLFTFSPR) are important for fusion. The N-linked (GlcNAc...) asparagine; by host glycan is linked to Asn-189.

Belongs to the hepacivirus polyprotein family. Homooligomer. Interacts with E1 (via C-terminus). Interacts with the non-structural protein 5A. Interacts (via N-terminus) with host STAT1 (via SH2 domain); this interaction results in decreased STAT1 phosphorylation and ubiquitin-mediated proteasome-dependent STAT1 degradation, leading to decreased IFN-stimulated gene transcription. Interacts with host STAT3; this interaction constitutively activates STAT3. Interacts with host LTBR receptor. Interacts with host TNFRSF1A receptor and possibly induces apoptosis. Interacts with host HNRPK. Interacts with host YWHAE. Interacts with host UBE3A/E6AP. Interacts with host DDX3X. Interacts with host APOA2. Interacts with host RXRA protein. Interacts with host SP110 isoform 3/Sp110b; this interaction sequesters the transcriptional corepressor SP110 away from the nucleus. Interacts with host CREB3 nuclear transcription protein; this interaction triggers cell transformation. Interacts with host ACY3. Interacts with host C1QR1. Interacts with host RBM24; this interaction, which enhances the interaction of the mature core protein with 5'-UTR, may inhibit viral translation and favor replication. Interacts with host EIF2AK2/PKR; this interaction induces the autophosphorylation of EIF2AK2. Part of the viral assembly initiation complex composed of NS2, E1, E2, NS3, NS4A, NS5A and the mature core protein. As to quaternary structure, forms a heterodimer with envelope glycoprotein E2. Interacts with mature core protein. Interacts with protease NS2. The heterodimer E1/E2 interacts with host CLDN1; this interaction plays a role in viral entry into host cell. Interacts with host SPSB2 (via C-terminus). Part of the viral assembly initiation complex composed of NS2, E1, E2, NS3, NS4A, NS5A and the mature core protein. In terms of processing, specific enzymatic cleavages in vivo yield mature proteins. The structural proteins, core, E1, E2 and p7 are produced by proteolytic processing by host signal peptidases. The core protein precursor is synthesized as a 23 kDa, which is retained in the ER membrane through the hydrophobic signal peptide. Cleavage by the signal peptidase releases the 21 kDa mature core protein. The cleavage of the core protein precursor occurs between aminoacids 176 and 188 but the exact cleavage site is not known. Some degraded forms of the core protein appear as well during the course of infection. The other proteins (p7, NS2, NS3, NS4A, NS4B, NS5A and NS5B) are cleaved by the viral proteases. Autoprocessing between NS2 and NS3 is mediated by the NS2 cysteine protease catalytic domain and regulated by the NS3 N-terminal domain. Post-translationally, phosphorylated by host PKC and PKA. Ubiquitinated; mediated by UBE3A and leading to core protein subsequent proteasomal degradation. In terms of processing, highly N-glycosylated.

Its subcellular location is the host endoplasmic reticulum membrane. It is found in the host mitochondrion membrane. The protein resides in the virion. The protein localises to the host cytoplasm. It localises to the host nucleus. Its subcellular location is the host lipid droplet. It is found in the virion membrane. Functionally, packages viral RNA to form a viral nucleocapsid, and promotes virion budding. Participates in the viral particle production as a result of its interaction with the non-structural protein 5A. Binds RNA and may function as a RNA chaperone to induce the RNA structural rearrangements taking place during virus replication. Modulates viral translation initiation by interacting with viral IRES and 40S ribosomal subunit. Affects various cell signaling pathways, host immunity and lipid metabolism. Prevents the establishment of cellular antiviral state by blocking the interferon-alpha/beta (IFN-alpha/beta) and IFN-gamma signaling pathways and by blocking the formation of phosphorylated STAT1 and promoting ubiquitin-mediated proteasome-dependent degradation of STAT1. Activates STAT3 leading to cellular transformation. Regulates the activity of cellular genes, including c-myc and c-fos. May repress the promoter of p53, and sequester CREB3 and SP110 isoform 3/Sp110b in the cytoplasm. Represses cell cycle negative regulating factor CDKN1A, thereby interrupting an important check point of normal cell cycle regulation. Targets transcription factors involved in the regulation of inflammatory responses and in the immune response: suppresses TNF-induced NF-kappa-B activation, and activates AP-1. Binds to dendritic cells (DCs) via C1QR1, resulting in down-regulation of T-lymphocytes proliferation. Alters lipid metabolism by interacting with hepatocellular proteins involved in lipid accumulation and storage. Induces up-regulation of FAS promoter activity, and thereby contributes to the increased triglyceride accumulation in hepatocytes (steatosis). In terms of biological role, forms a heterodimer with envelope glycoprotein E2, which mediates virus attachment to the host cell, virion internalization through clathrin-dependent endocytosis and fusion with host membrane. Fusion with the host cell is most likely mediated by both E1 and E2, through conformational rearrangements of the heterodimer required for fusion rather than a classical class II fusion mechanism. E1/E2 heterodimer binds host apolipoproteins such as APOB and ApoE thereby forming a lipo-viro-particle (LVP). APOE associated to the LVP allows the initial virus attachment to cell surface receptors such as the heparan sulfate proteoglycans (HSPGs), syndecan-1 (SDC1), syndecan-1 (SDC2), the low-density lipoprotein receptor (LDLR) and scavenger receptor class B type I (SCARB1). The cholesterol transfer activity of SCARB1 allows E2 exposure and binding of E2 to SCARB1 and the tetraspanin CD81. E1/E2 heterodimer binding on CD81 activates the epithelial growth factor receptor (EGFR) signaling pathway. Diffusion of the complex E1-E2-EGFR-SCARB1-CD81 to the cell lateral membrane allows further interaction with Claudin 1 (CLDN1) and occludin (OCLN) to finally trigger HCV entry. This Hepatitis C virus (isolate EC1) (HCV) protein is Genome polyprotein.